We begin with the raw amino-acid sequence, 334 residues long: Holliday junction branch migration complex subunit RuvB (334 aa).

The interval 4 to 184 (ADRIISASPQ…FGIVQRLEFY (181 aa)) is large ATPase domain (RuvB-L). ATP-binding positions include Ile23, Arg24, Gly65, Lys68, Thr69, Thr70, 131–133 (EDY), Arg174, Tyr184, and Arg221. Thr69 contributes to the Mg(2+) binding site. Positions 185-255 (NVDDLTSIVK…IAKQALVMLD (71 aa)) are small ATPAse domain (RuvB-S). Residues 258-334 (PQGFDFMDIK…YAHLGISLSE (77 aa)) are head domain (RuvB-H). Arg294, Arg313, and Arg318 together coordinate DNA.

The protein belongs to the RuvB family. In terms of assembly, homohexamer. Forms an RuvA(8)-RuvB(12)-Holliday junction (HJ) complex. HJ DNA is sandwiched between 2 RuvA tetramers; dsDNA enters through RuvA and exits via RuvB. An RuvB hexamer assembles on each DNA strand where it exits the tetramer. Each RuvB hexamer is contacted by two RuvA subunits (via domain III) on 2 adjacent RuvB subunits; this complex drives branch migration. In the full resolvosome a probable DNA-RuvA(4)-RuvB(12)-RuvC(2) complex forms which resolves the HJ.

Its subcellular location is the cytoplasm. It catalyses the reaction ATP + H2O = ADP + phosphate + H(+). Functionally, the RuvA-RuvB-RuvC complex processes Holliday junction (HJ) DNA during genetic recombination and DNA repair, while the RuvA-RuvB complex plays an important role in the rescue of blocked DNA replication forks via replication fork reversal (RFR). RuvA specifically binds to HJ cruciform DNA, conferring on it an open structure. The RuvB hexamer acts as an ATP-dependent pump, pulling dsDNA into and through the RuvAB complex. RuvB forms 2 homohexamers on either side of HJ DNA bound by 1 or 2 RuvA tetramers; 4 subunits per hexamer contact DNA at a time. Coordinated motions by a converter formed by DNA-disengaged RuvB subunits stimulates ATP hydrolysis and nucleotide exchange. Immobilization of the converter enables RuvB to convert the ATP-contained energy into a lever motion, pulling 2 nucleotides of DNA out of the RuvA tetramer per ATP hydrolyzed, thus driving DNA branch migration. The RuvB motors rotate together with the DNA substrate, which together with the progressing nucleotide cycle form the mechanistic basis for DNA recombination by continuous HJ branch migration. Branch migration allows RuvC to scan DNA until it finds its consensus sequence, where it cleaves and resolves cruciform DNA. This is Holliday junction branch migration complex subunit RuvB from Haemophilus ducreyi (strain 35000HP / ATCC 700724).